Here is a 177-residue protein sequence, read N- to C-terminus: Large ribosomal subunit protein uL6 (177 aa).

The protein belongs to the universal ribosomal protein uL6 family. In terms of assembly, part of the 50S ribosomal subunit.

Its function is as follows. This protein binds to the 23S rRNA, and is important in its secondary structure. It is located near the subunit interface in the base of the L7/L12 stalk, and near the tRNA binding site of the peptidyltransferase center. The protein is Large ribosomal subunit protein uL6 of Pseudomonas paraeruginosa (strain DSM 24068 / PA7) (Pseudomonas aeruginosa (strain PA7)).